The chain runs to 153 residues: Xanthine-guanine phosphoribosyltransferase (153 aa).

5-phospho-alpha-D-ribose 1-diphosphate is bound by residues 37 to 38, Arg69, and 88 to 96; these read RG and DDLVDTGGT. Arg69 serves as a coordination point for GMP. Asp89 is a Mg(2+) binding site. Asp92 and Ile135 together coordinate guanine. 2 residues coordinate xanthine: Asp92 and Ile135. GMP is bound by residues 92–96 and 134–135; these read DTGGT and WI.

Belongs to the purine/pyrimidine phosphoribosyltransferase family. XGPT subfamily. As to quaternary structure, homotetramer. It depends on Mg(2+) as a cofactor.

The protein resides in the cell inner membrane. It catalyses the reaction GMP + diphosphate = guanine + 5-phospho-alpha-D-ribose 1-diphosphate. The catalysed reaction is XMP + diphosphate = xanthine + 5-phospho-alpha-D-ribose 1-diphosphate. The enzyme catalyses IMP + diphosphate = hypoxanthine + 5-phospho-alpha-D-ribose 1-diphosphate. Its pathway is purine metabolism; GMP biosynthesis via salvage pathway; GMP from guanine: step 1/1. It functions in the pathway purine metabolism; XMP biosynthesis via salvage pathway; XMP from xanthine: step 1/1. Purine salvage pathway enzyme that catalyzes the transfer of the ribosyl-5-phosphate group from 5-phospho-alpha-D-ribose 1-diphosphate (PRPP) to the N9 position of the 6-oxopurines guanine and xanthine to form the corresponding ribonucleotides GMP (guanosine 5'-monophosphate) and XMP (xanthosine 5'-monophosphate), with the release of PPi. To a lesser extent, also acts on hypoxanthine. The protein is Xanthine-guanine phosphoribosyltransferase of Photorhabdus laumondii subsp. laumondii (strain DSM 15139 / CIP 105565 / TT01) (Photorhabdus luminescens subsp. laumondii).